Here is a 364-residue protein sequence, read N- to C-terminus: Metalloendoproteinase 1-MMP (364 aa).

The signal sequence occupies residues 1–28 (MSRNLIYRRNRALCFVLILFCFPYRFGA). Positions 29-149 (RNTPEAEQST…NNDFLHTTAH (121 aa)) are cleaved as a propeptide — activation peptide. N-linked (GlcNAc...) asparagine glycosylation occurs at asparagine 49. The short motif at 128–135 (PRCGVSDT) is the Cysteine switch element. Cysteine 130 is a binding site for Zn(2+). Aspartate 211 lines the Ca(2+) pocket. Zn(2+) contacts are provided by histidine 221 and aspartate 223. Ca(2+) contacts are provided by aspartate 228 and glycine 229. A Zn(2+)-binding site is contributed by histidine 236. Glycine 243 is a Ca(2+) binding site. Zn(2+) is bound at residue histidine 246. Positions 248 and 251 each coordinate Ca(2+). Histidine 275 provides a ligand contact to Zn(2+). Residue glutamate 276 is part of the active site. Zn(2+) is bound by residues histidine 279 and histidine 285. An N-linked (GlcNAc...) asparagine glycan is attached at asparagine 338. The GPI-anchor amidated glycine moiety is linked to residue glycine 339. The propeptide at 340–364 (TVSHRFLSGNFIGYVLLVVGLILFL) is removed in mature form.

It belongs to the peptidase M10A family. Matrix metalloproteinases (MMPs) subfamily. It depends on Ca(2+) as a cofactor. Zn(2+) is required as a cofactor. Mostly expressed in flowers, roots and stems, and, to a lower extent, in leaves.

The protein localises to the cell membrane. With respect to regulation, inhibited by human TIMP-1 and TIMP-2 and by the peptide hydroxamate inhibitor (BB-94). Repressed by acetohydroxamic acid (AHA). Its function is as follows. Matrix metalloproteinases (MMPs) or matrixins may play a role in the degradation and remodeling of the extracellular matrix (ECM) during development or in response to stresses. Can cleave myelin basic protein as well as fluorigenic peptide substrates, McaPLANvaDpaAR-NH(2) and McaPChaGNvaHADpa-NH(2) 4-fold more efficiently than McaPLGLDpaAR-NH(2) (QF24). Active on myelin basic protein (MBP) and, to some extent, on McaPLGLDpaAR-NH(2) (QF24) and beta-casein. This chain is Metalloendoproteinase 1-MMP, found in Arabidopsis thaliana (Mouse-ear cress).